We begin with the raw amino-acid sequence, 419 residues long: Sphingomyelin phosphodiesterase 2 (419 aa).

Glutamate 49 is a Mg(2+) binding site. Histidine 272 functions as the Proton acceptor in the catalytic mechanism. Helical transmembrane passes span 326–346 and 354–374; these read FSGYVIVWGLSLLVLLCVLAA and AIILCIPSVGLVLVAGAVYLF.

Belongs to the neutral sphingomyelinase family. The cofactor is Mg(2+). Although widely expressed in all tissues examined, except the spleen, high enzymatic activity occurs only in the brain.

The protein localises to the cell membrane. It carries out the reaction a sphingomyelin + H2O = phosphocholine + an N-acylsphing-4-enine + H(+). The catalysed reaction is an N-(acyl)-sphingosylphosphocholine + H2O = an N-acyl-sphingoid base + phosphocholine + H(+). The enzyme catalyses 1-O-octadecyl-sn-glycero-3-phosphocholine + H2O = 1-O-octadecyl-sn-glycerol + phosphocholine + H(+). It catalyses the reaction 1-hexadecanoyl-sn-glycero-3-phosphocholine + H2O = 1-hexadecanoyl-sn-glycerol + phosphocholine + H(+). It carries out the reaction a sphingosylphosphocholine + H2O = a sphingoid base + phosphocholine + H(+). The catalysed reaction is 1-O-hexadecyl-sn-glycero-3-phosphocholine + H2O = 1-O-hexadecyl-sn-glycerol + phosphocholine + H(+). It functions in the pathway lipid metabolism; sphingolipid metabolism. Activated by arachidonic acid. In terms of biological role, catalyzes, at least in vitro, the hydrolysis of sphingomyelin to form ceramide and phosphocholine. Also hydrolyzes 1-O-alkyl-2-lyso-sn-glycero-3-phosphocholine (lyso-platelet-activating factor) in vivo. Also acts on 1-acyl-2-lyso-sn-glycero-3-phosphocholine (lyso-PC) and sphingosylphosphocholine. The polypeptide is Sphingomyelin phosphodiesterase 2 (Mus musculus (Mouse)).